We begin with the raw amino-acid sequence, 248 residues long: Small ribosomal subunit protein uS2c (248 aa).

This sequence belongs to the universal ribosomal protein uS2 family.

It is found in the plastid. The protein localises to the chloroplast. In Trachelium caeruleum (Blue throatwort), this protein is Small ribosomal subunit protein uS2c (rps2).